Here is a 554-residue protein sequence, read N- to C-terminus: Dihydroxy-acid dehydratase (554 aa).

Aspartate 78 is a Mg(2+) binding site. Cysteine 119 lines the [2Fe-2S] cluster pocket. 2 residues coordinate Mg(2+): aspartate 120 and lysine 121. An N6-carboxylysine modification is found at lysine 121. Cysteine 192 contacts [2Fe-2S] cluster. Mg(2+) is bound at residue glutamate 443. Serine 469 acts as the Proton acceptor in catalysis.

This sequence belongs to the IlvD/Edd family. As to quaternary structure, homodimer. [2Fe-2S] cluster is required as a cofactor. Requires Mg(2+) as cofactor.

The catalysed reaction is (2R)-2,3-dihydroxy-3-methylbutanoate = 3-methyl-2-oxobutanoate + H2O. The enzyme catalyses (2R,3R)-2,3-dihydroxy-3-methylpentanoate = (S)-3-methyl-2-oxopentanoate + H2O. The protein operates within amino-acid biosynthesis; L-isoleucine biosynthesis; L-isoleucine from 2-oxobutanoate: step 3/4. Its pathway is amino-acid biosynthesis; L-valine biosynthesis; L-valine from pyruvate: step 3/4. Functionally, functions in the biosynthesis of branched-chain amino acids. Catalyzes the dehydration of (2R,3R)-2,3-dihydroxy-3-methylpentanoate (2,3-dihydroxy-3-methylvalerate) into 2-oxo-3-methylpentanoate (2-oxo-3-methylvalerate) and of (2R)-2,3-dihydroxy-3-methylbutanoate (2,3-dihydroxyisovalerate) into 2-oxo-3-methylbutanoate (2-oxoisovalerate), the penultimate precursor to L-isoleucine and L-valine, respectively. The protein is Dihydroxy-acid dehydratase of Clostridium novyi (strain NT).